Consider the following 104-residue polypeptide: MIRKAFVMQVNPDAHEEYQRRHNPIWPELEAVLKDHGAHHYAIYLDKERHLLFATVEIESEARWEAVASTEVCQRWWKYMREVMPSNPDNSPLSAELKEVFYLA.

Tyrosine 18 is a substrate binding site. Histidine 22 acts as the Proton donor in catalysis. Substrate-binding positions include tyrosine 41 and 76 to 77 (WW).

It belongs to the rhamnose mutarotase family. In terms of assembly, homodimer.

The protein localises to the cytoplasm. The catalysed reaction is alpha-L-rhamnose = beta-L-rhamnose. It participates in carbohydrate metabolism; L-rhamnose metabolism. Functionally, involved in the anomeric conversion of L-rhamnose. The protein is L-rhamnose mutarotase of Klebsiella pneumoniae (strain 342).